The chain runs to 580 residues: Trafficking protein particle complex subunit 14 (580 aa).

Disordered stretches follow at residues 90–138 (GMPG…ATTL) and 480–533 (VSHP…RSGS). Residues 105-116 (PGGGDPGGGGLF) are compositionally biased toward gly residues. Over residues 124-137 (THGPGPATSGGATT) the composition is skewed to low complexity. Serine 491 carries the phosphoserine modification. The span at 492–502 (RKSSPSSPAVR) shows a compositional bias: low complexity. The segment covering 512 to 525 (LGRSQSFSHQQPSR) has biased composition (polar residues). Serine 517 is subject to Phosphoserine. The residue at position 541 (threonine 541) is a Phosphothreonine. Serine 546 carries the phosphoserine modification.

In terms of assembly, component of the multisubunit TRAPP II complex, which includes at least TRAPPC1, TRAPPC2, TRAPPC2L, TRAPPC3, TRAPPC4, TRAPPC5, TRAPPC6A/B, TRAPPC9, TRAPPC10 and TRAPPC14. TRAPPC9, TRAPPC10 and TRAPPC14 are specific subunits of the TRAPP II complex. Interacts with alpha-tubulin during mitosis. Interacts with RAB3IP (via the N-terminal region); this interaction mediates RAB3IP association with the TRAPP II complex. Interacts with TRAPPC10. Interacts with FBF1. Broadly expressed. High levels in brain, cerebellum, testis and whole blood.

It localises to the cytoplasm. It is found in the cytoskeleton. Its subcellular location is the spindle. The protein resides in the vesicle. The protein localises to the midbody. In terms of biological role, specific subunit of the TRAPP (transport protein particle) II complex, a highly conserved vesicle tethering complex that functions in late Golgi trafficking as a membrane tether. TRAPP II complex also has GEF activity toward RAB1A. TRAPPC14 is dispensable for TRAPPII complex integrity but mediates RAB3IP preciliary vesicle trafficking to the mother centriole during ciliogenesis. Modulates YAP1 activity as transcriptional regulator. The chain is Trafficking protein particle complex subunit 14 from Homo sapiens (Human).